The chain runs to 428 residues: 3-phosphoshikimate 1-carboxyvinyltransferase (428 aa).

3-phosphoshikimate is bound by residues lysine 21, serine 22, and arginine 26. A phosphoenolpyruvate-binding site is contributed by lysine 21. Phosphoenolpyruvate is bound by residues glycine 94 and arginine 122. 3-phosphoshikimate contacts are provided by serine 166, serine 167, glutamine 168, serine 194, aspartate 306, and lysine 333. Glutamine 168 contacts phosphoenolpyruvate. Aspartate 306 acts as the Proton acceptor in catalysis. The phosphoenolpyruvate site is built by arginine 337, arginine 379, and lysine 405.

It belongs to the EPSP synthase family. In terms of assembly, monomer.

It is found in the cytoplasm. The enzyme catalyses 3-phosphoshikimate + phosphoenolpyruvate = 5-O-(1-carboxyvinyl)-3-phosphoshikimate + phosphate. The protein operates within metabolic intermediate biosynthesis; chorismate biosynthesis; chorismate from D-erythrose 4-phosphate and phosphoenolpyruvate: step 6/7. In terms of biological role, catalyzes the transfer of the enolpyruvyl moiety of phosphoenolpyruvate (PEP) to the 5-hydroxyl of shikimate-3-phosphate (S3P) to produce enolpyruvyl shikimate-3-phosphate and inorganic phosphate. This chain is 3-phosphoshikimate 1-carboxyvinyltransferase, found in Clostridium acetobutylicum (strain ATCC 824 / DSM 792 / JCM 1419 / IAM 19013 / LMG 5710 / NBRC 13948 / NRRL B-527 / VKM B-1787 / 2291 / W).